The following is a 134-amino-acid chain: ATP synthase epsilon chain (134 aa).

The protein belongs to the ATPase epsilon chain family. As to quaternary structure, F-type ATPases have 2 components, CF(1) - the catalytic core - and CF(0) - the membrane proton channel. CF(1) has five subunits: alpha(3), beta(3), gamma(1), delta(1), epsilon(1). CF(0) has three main subunits: a, b and c.

It is found in the cell inner membrane. Produces ATP from ADP in the presence of a proton gradient across the membrane. This is ATP synthase epsilon chain from Rhodospirillum rubrum (strain ATCC 11170 / ATH 1.1.1 / DSM 467 / LMG 4362 / NCIMB 8255 / S1).